The primary structure comprises 485 residues: Cysteine--tRNA ligase (485 aa).

Residue Cys27 participates in Zn(2+) binding. The 'HIGH' region motif lies at 29 to 39 (ITAYDLCHIGH). Zn(2+) is bound by residues Cys208, His233, and Glu237. Residues 265 to 269 (KMSKS) carry the 'KMSKS' region motif. Lys268 serves as a coordination point for ATP.

The protein belongs to the class-I aminoacyl-tRNA synthetase family. As to quaternary structure, monomer. Requires Zn(2+) as cofactor.

The protein resides in the cytoplasm. The enzyme catalyses tRNA(Cys) + L-cysteine + ATP = L-cysteinyl-tRNA(Cys) + AMP + diphosphate. The protein is Cysteine--tRNA ligase of Nitratidesulfovibrio vulgaris (strain DSM 19637 / Miyazaki F) (Desulfovibrio vulgaris).